The chain runs to 414 residues: Putative L-lactate dehydrogenase (414 aa).

The FMN hydroxy acid dehydrogenase domain maps to Arg29–Arg406. Position 55 (Tyr55) interacts with a 2-oxocarboxylate. Ser137 and Gln159 together coordinate FMN. Tyr161 lines the a 2-oxocarboxylate pocket. Position 187 (Thr187) interacts with FMN. Residue Arg196 coordinates a 2-oxocarboxylate. Lys277 lines the FMN pocket. His301 acts as the Proton acceptor in catalysis. Arg304 is a binding site for a 2-oxocarboxylate. FMN is bound by residues Asp332–Met336 and Gly355–Arg356.

This sequence belongs to the FMN-dependent alpha-hydroxy acid dehydrogenase family. The cofactor is FMN.

It carries out the reaction (S)-lactate + A = pyruvate + AH2. The protein is Putative L-lactate dehydrogenase (lldD) of Mycobacterium tuberculosis (strain ATCC 25618 / H37Rv).